A 174-amino-acid polypeptide reads, in one-letter code: Ribosome maturation factor RimP (174 aa).

It belongs to the RimP family.

The protein localises to the cytoplasm. In terms of biological role, required for maturation of 30S ribosomal subunits. The sequence is that of Ribosome maturation factor RimP from Acinetobacter baumannii (strain SDF).